A 284-amino-acid polypeptide reads, in one-letter code: Four and a half LIM domains protein 5 (284 aa).

A C4-type zinc finger spans residues 8–32 (CQYCMASLLGKKYVLKDDNPYCVSC). 4 consecutive LIM zinc-binding domains span residues 39 to 100 (NYCE…ECSS), 101 to 160 (KCFH…KEFA), 161 to 220 (HYCS…LYAK), and 223 to 283 (AACT…VDTD).

Interacts with CREM (via the third LIM domain). Interacts (via second LIM domain) with SPAG8.

It localises to the nucleus. Its function is as follows. May be involved in the regulation of spermatogenesis. Stimulates CREM transcriptional activity in a phosphorylation-independent manner. The polypeptide is Four and a half LIM domains protein 5 (FHL5) (Bos taurus (Bovine)).